Here is a 329-residue protein sequence, read N- to C-terminus: Secretory carrier-associated membrane protein 2 (329 aa).

Disordered regions lie at residues 1–21 and 51–72; these read MSAF…FQDP and VTQL…PTQP. Residues 1–153 are Cytoplasmic-facing; it reads MSAFDTNPFA…DYQRICKMLY (153 aa). The chain crosses the membrane as a helical span at residues 154-174; it reads YLWMLHSVTLFLNLLACLAWF. Over 175–181 the chain is Lumenal; it reads SGNSSKG. A helical membrane pass occupies residues 182–202; that stretch reads VDFGLSILWFLIFTPCAFLCW. Residues 203-218 lie on the Cytoplasmic side of the membrane; the sequence is YRPIYKAFRSDNSFSF. Residues 203–218 form an interaction with SLC9A7 region; it reads YRPIYKAFRSDNSFSF. Residues 219-239 form a helical membrane-spanning segment; that stretch reads FVFFFVFFCQIGIYIIQLVGI. The Lumenal segment spans residues 240 to 262; it reads PGLGDSGWIAALSTLDNHSLAIS. The chain crosses the membrane as a helical span at residues 263–283; that stretch reads VIMMVVAGFFTLCAVLSVFLL. Residues 284–329 lie on the Cytoplasmic side of the membrane; sequence QRVHSLYRRTGASFQQAQEEFSQGIFSSRTFHRAASSAAQGAFQGN. Phosphoserine occurs at positions 319 and 320.

This sequence belongs to the SCAMP family. Interacts with SLC6A4 and SLC9A7. Interacts with SLC9A5; this interaction regulates SLC9A5 cell-surface targeting and SLC9A5 activity. Widely expressed.

The protein localises to the golgi apparatus. Its subcellular location is the trans-Golgi network membrane. It localises to the recycling endosome membrane. Functionally, functions in post-Golgi recycling pathways. Acts as a recycling carrier to the cell surface. This Homo sapiens (Human) protein is Secretory carrier-associated membrane protein 2 (SCAMP2).